We begin with the raw amino-acid sequence, 96 residues long: Integration host factor subunit beta (96 aa).

Belongs to the bacterial histone-like protein family. In terms of assembly, heterodimer of an alpha and a beta chain.

Its function is as follows. This protein is one of the two subunits of integration host factor, a specific DNA-binding protein that functions in genetic recombination as well as in transcriptional and translational control. In Photobacterium profundum (strain SS9), this protein is Integration host factor subunit beta.